The following is a 513-amino-acid chain: Sucrose transport protein SUC1 (513 aa).

Positions 1–11 (MGAYETEKPTK) are enriched in basic and acidic residues. Residues 1–26 (MGAYETEKPTKDAAALETQSPEDFDQ) form a disordered region. At 1-32 (MGAYETEKPTKDAAALETQSPEDFDQPSPLRK) the chain is on the cytoplasmic side. S20 carries the post-translational modification Phosphoserine. The chain crosses the membrane as a helical span at residues 33–53 (IISVASIAAGVQFGWALQLSL). Residues 54-67 (LTPYVQLLGIPHKW) are Extracellular-facing. The chain crosses the membrane as a helical span at residues 68-88 (SSLIWLCGPVSGMIVQPIVGF). The Cytoplasmic portion of the chain corresponds to 89–101 (HSDRCRSKFGRRR). The helical transmembrane segment at 102 to 122 (PFIATGAALVAVAVFLIGYAA) threads the bilayer. Over 123 to 139 (DFGYKMGDKLEEKVKVR) the chain is Extracellular. Residues 140–160 (AIGIFALGFWILDVANNTLQG) form a helical membrane-spanning segment. Over 161–178 (PCRAFLADLAAGDAKRTR) the chain is Cytoplasmic. Residues 179–199 (VANAFFSFFMAVGNVLGYAAG) form a helical membrane-spanning segment. The Extracellular portion of the chain corresponds to 200–224 (SYTNLHKMFPFTMTKACDIYCANLK). The chain crosses the membrane as a helical span at residues 225-245 (TCFFLSITLLLIVTVTSLWYV). Topologically, residues 246–282 (NDKQWSPPPRNADDDEKTSSVPLFGEIFGAFKVMKRP) are cytoplasmic. A helical membrane pass occupies residues 283–303 (MWMLLIVTALNWIAWFPFLLF). Topologically, residues 304-334 (DTDWMGREVFGGDSDGNERSKKLYSLGVQSG) are extracellular. The helical transmembrane segment at 335–355 (AMGLMFNSIVLGFMSLGVEWI) threads the bilayer. Topologically, residues 356–365 (GRKLGGAKRL) are cytoplasmic. Residues 366-386 (WGIVNFILAAGLAMTVLVTKF) traverse the membrane as a helical segment. Residues 387 to 408 (AEDHRKTAGDLAGPSASVKAGA) lie on the Extracellular side of the membrane. A helical membrane pass occupies residues 409–429 (LSLFAVLGIPLAITFSTPFAL). At 430-441 (ASIFSSCSGAGQ) the chain is on the cytoplasmic side. The helical transmembrane segment at 442–462 (GLSLGVLNLAIVIPQMIVSLG) threads the bilayer. Residues 463-474 (GGPFDALFGGGN) lie on the Extracellular side of the membrane. The helical transmembrane segment at 475-495 (LPAFIVAAIAAAISGVLALTV) threads the bilayer. At 496–513 (LPSPPPDAPKATTMGGFH) the chain is on the cytoplasmic side.

It belongs to the glycoside-pentoside-hexuronide (GPH) cation symporter transporter (TC 2.A.2.4) family. As to expression, expressed in flowers (at protein level). Highly expressed in pollen. Expressed in pollen tubes and root vascular cylinder, pericycle and endodermis.

Its subcellular location is the membrane. The catalysed reaction is sucrose(out) + H(+)(out) = sucrose(in) + H(+)(in). The protein operates within glycan biosynthesis; sucrose metabolism. Inhibited by DEPC, protonophores (e.g. dinitrophenol and carbonyl cyanide m-chlorophenyl-hydrazone (CCCP)), and SH group inhibitors (e.g. N-ethylmaleimide (NEM) and p-chloromercuriphenyl sulphonic acid (PCMPS)). Functionally, responsible for the transport of sucrose into the cell, with the concomitant uptake of protons (symport system). This transport is both voltage- and energy-dependent. Can also transport other glucosides such as maltose, alpha-phenylglucoside and beta-phenylglucoside. May also transport biotin. Required for normal pollen germination and anthocyanin accumulation induced by sucrose. This Arabidopsis thaliana (Mouse-ear cress) protein is Sucrose transport protein SUC1.